A 187-amino-acid chain; its full sequence is Elongation factor P (187 aa).

It belongs to the elongation factor P family.

The protein resides in the cytoplasm. The protein operates within protein biosynthesis; polypeptide chain elongation. Its function is as follows. Involved in peptide bond synthesis. Stimulates efficient translation and peptide-bond synthesis on native or reconstituted 70S ribosomes in vitro. Probably functions indirectly by altering the affinity of the ribosome for aminoacyl-tRNA, thus increasing their reactivity as acceptors for peptidyl transferase. The protein is Elongation factor P of Roseobacter denitrificans (strain ATCC 33942 / OCh 114) (Erythrobacter sp. (strain OCh 114)).